Reading from the N-terminus, the 128-residue chain is RYamide neuropeptides (128 aa).

Positions 1–23 are cleaved as a signal peptide; it reads MHARKLIVVLVYILTVLVSVAVS. Residues 26-29 constitute a propeptide that is removed on maturation; the sequence is YTSE. Residue Tyr-44 is modified to Tyrosine amide. Positions 47–63 are excised as a propeptide; it reads GGPSPNNKENKVNIRPR. Tyr-73 is modified (tyrosine amide). Positions 77 to 128 are excised as a propeptide; sequence SGWSPNASLVYPVSTPLCGLDEDLSCAYTGISDLYRCTPRKGESEEFTTSSN.

It is found in the secreted. Functionally, neuropeptides RYamide-1 and RYamide-2 are ligands for the G-protein coupled receptor RYa-R. RYamide-2 is the most potent activator of RYa-R. In Tribolium castaneum (Red flour beetle), this protein is RYamide neuropeptides.